The chain runs to 566 residues: Urease subunit alpha (566 aa).

Residues 128–566 (GGVDTHIHFI…LPMAQRYFLF (439 aa)) form the Urease domain. Ni(2+) is bound by residues His-133, His-135, and Lys-216. The residue at position 216 (Lys-216) is an N6-carboxylysine. Substrate is bound at residue His-218. His-245 and His-271 together coordinate Ni(2+). His-319 functions as the Proton donor in the catalytic mechanism. Asp-359 is a Ni(2+) binding site.

This sequence belongs to the metallo-dependent hydrolases superfamily. Urease alpha subunit family. As to quaternary structure, may form a heterohexamer of 3 UreC (alpha) and 3 UreAB (gamma/beta) subunits. May also form a heterotrimer of UreA (gamma), UreB (beta) and UreC (alpha) subunits. Three heterotrimers associate to form the active enzyme. Requires Ni cation as cofactor. Carboxylation allows a single lysine to coordinate two nickel ions.

Its subcellular location is the cytoplasm. The enzyme catalyses urea + 2 H2O + H(+) = hydrogencarbonate + 2 NH4(+). It participates in nitrogen metabolism; urea degradation; CO(2) and NH(3) from urea (urease route): step 1/1. The protein is Urease subunit alpha of Pseudomonas savastanoi pv. phaseolicola (strain 1448A / Race 6) (Pseudomonas syringae pv. phaseolicola (strain 1448A / Race 6)).